We begin with the raw amino-acid sequence, 380 residues long: Interleukin-13 receptor subunit alpha-2 (380 aa).

The N-terminal stretch at 1 to 26 (MAFVCLAIGCLYTFLISTTFGCTSSS) is a signal peptide. Residues 27–343 (DTEIKVNPPQ…EDLSKKTLLR (317 aa)) lie on the Extracellular side of the membrane. Fibronectin type-III domains follow at residues 34 to 134 (PPQD…SPQG), 139 to 235 (KVQD…LQNI), and 240 to 333 (PPVY…CWEG). A disulfide bridge connects residues Cys-65 and Cys-113. N-linked (GlcNAc...) asparagine glycosylation is present at Asn-115. Disulfide bonds link Cys-145–Cys-155 and Cys-184–Cys-197. 3 N-linked (GlcNAc...) asparagine glycosylation sites follow: Asn-215, Asn-290, and Asn-299. An intrachain disulfide couples Cys-269 to Cys-316. Residues 322–326 (WSEWS) carry the WSXWS motif motif. A helical transmembrane segment spans residues 344-363 (FWLPFGFILILVIFVTGLLL). Residues 364–380 (RKPNTYPKMIPEFFCDT) lie on the Cytoplasmic side of the membrane.

Belongs to the type I cytokine receptor family. Type 5 subfamily. Interacts with IL4RA. Interacts with high affinity to interleukin-13 (IL13), but not to interleukin-4 (IL4). Post-translationally, cleaved by MMP8 leading to a soluble form that is also able to interact with IL13.

Its subcellular location is the cell membrane. In terms of biological role, cell surface receptor that plays a role in the regulation of IL-13-mediated responses. Functions as a decoy receptor that inhibits IL-13- and IL-4-mediated signal transduction via the JAK-STAT pathway and thereby modulates immune responses and inflammation. Serves as a functional signaling receptor for IL-13 in an alternative pathway involving AP-1 ultimately leading to the production of TGFB1. The protein is Interleukin-13 receptor subunit alpha-2 (IL13RA2) of Homo sapiens (Human).